The sequence spans 413 residues: MALRRFLRTSPITSTAQPAPLYDNQDIQDIVGAYARPWQSRFGDITITTTSAPVWSGRYPSVAARNIIVNTILGAHLNAFSGGVIAQYRGLTWRDNIMSSLAPPSQNPPPPAWVPAENVQLDSDNYPQYALNLSKMWSVNLDVHIMTMWALSDYGPLYEISVPTAPMPAMTTAALMAYIGCSITQLAMTAYQYAGQLPQTAAATMTTTLRWLAAIWFGSLCGVVHRNHTVNGFYFDFGKPGFNPDHAVLKWNDGNRAAPPAAARFRVYRVRSPHWQQMTSEVAGAILAQSVTAVAGLTAMFNNRGLPVWAQNIPHFTGAAAGTRVSRTYNPVTMAAARHQNWQAAGLITAVKQAELDQQYTDYAQAIEVHLTAQLAANPVANGRMPIQPFLPADFAAAGGTNQVVADARLMFP.

It belongs to the reoviridae clamp protein family. In terms of assembly, interacts with capsid proteins VP3, VP4 and VP7.

The protein localises to the virion. In terms of biological role, located at the interface of the incomplete T=13 outer capsid and the pseudo T=2 inner capsid, 120 VP6 subunits clamp and stabilize the inner capsid shell. The protein is Clamp protein VP6 (S8) of Ctenopharyngodon idella (Grass carp).